The sequence spans 503 residues: TGF-beta receptor type-1 (503 aa).

Residues 1-29 form the signal peptide; the sequence is MEAAAAAPRRPQLLIVLVAAATLLPGAKA. At 30-126 the chain is on the extracellular side; sequence LQCFCHLCTK…QSAGLGPVEL (97 aa). 5 cysteine pairs are disulfide-bonded: Cys-32/Cys-50, Cys-34/Cys-37, Cys-44/Cys-67, Cys-82/Cys-96, and Cys-97/Cys-102. The N-linked (GlcNAc...) asparagine glycan is linked to Asn-41. The chain crosses the membrane as a helical span at residues 127 to 147; it reads AAVIAGPVCFVCIALMLMVYI. Over 148–503 the chain is Cytoplasmic; that stretch reads CHNRTVIHHR…QLSQQEGIKM (356 aa). A Phosphoserine modification is found at Ser-165. Residues 175-204 enclose the GS domain; the sequence is TTLKDLIYDMTTSGSGSGLPLLVQRTIART. Phosphothreonine; by TGFBR2 occurs at positions 185 and 186. Phosphoserine; by TGFBR2 is present on residues Ser-187, Ser-189, and Ser-191. An FKBP1A-binding motif is present at residues 193–194; sequence LP. Residues 205–495 form the Protein kinase domain; it reads IVLQESIGKG…LRIKKTLSQL (291 aa). ATP contacts are provided by residues 211–219 and Lys-232; that span reads IGKGRFGEV. A Glycyl lysine isopeptide (Lys-Gly) (interchain with G-Cter in ubiquitin) cross-link involves residue Lys-268. The active-site Proton acceptor is the Asp-333. Lys-391 participates in a covalent cross-link: Glycyl lysine isopeptide (Lys-Gly) (interchain with G-Cter in SUMO).

This sequence belongs to the protein kinase superfamily. TKL Ser/Thr protein kinase family. TGFB receptor subfamily. Homodimer; in the endoplasmic reticulum but also at the cell membrane. Heterohexamer; TGFB1, TGFB2 and TGFB3 homodimeric ligands assemble a functional receptor composed of two TGFBR1 and TGFBR2 heterodimers to form a ligand-receptor heterohexamer. The respective affinity of TGBRB1 and TGFBR2 for the ligands may modulate the kinetics of assembly of the receptor and may explain the different biological activities of TGFB1, TGFB2 and TGFB3. Component of a complex composed of TSC22D1 (via N-terminus), TGFBR1 and TGFBR2; the interaction between TSC22D1 and TGFBR1 is inhibited by SMAD7 and promoted by TGFB1. Interacts with CD109; inhibits TGF-beta receptor activation in keratinocytes. Interacts with RBPMS. Interacts (unphosphorylated) with FKBP1A; prevents TGFBR1 phosphorylation by TGFBR2 and stabilizes it in the inactive conformation. Interacts with SMAD2, SMAD3 and ZFYVE9; ZFYVE9 recruits SMAD2 and SMAD3 to the TGF-beta receptor. Interacts with TRAF6 and MAP3K7; induces MAP3K7 activation by TRAF6. Interacts with PARD6A; involved in TGF-beta induced epithelial to mesenchymal transition. Interacts with NEDD4L. Interacts with SMAD7, SMURF1 and SMURF2; SMAD7 recruits NEDD4L, SMURF1 and SMURF2 to the TGF-beta receptor. Interacts with USP15 and VPS39. Interacts with SDCBP (via C-terminus). Interacts with CAV1 and this interaction is impaired in the presence of SDCBP. Interacts with APPL1; interaction is TGF beta dependent; mediates trafficking of the TGFBR1 from the endosomes to the nucleus via microtubules in a TRAF6-dependent manner. Interacts with GPR50; this interaction promotes the constitutive activation of SMAD signaling pathway. It depends on Mg(2+) as a cofactor. Requires Mn(2+) as cofactor. Post-translationally, phosphorylated at basal levels in the absence of ligand. Activated upon phosphorylation by TGFBR2, mainly in the GS domain. Phosphorylation in the GS domain abrogates FKBP1A-binding. In terms of processing, N-Glycosylated. Ubiquitinated; undergoes ubiquitination catalyzed by several E3 ubiquitin ligases including SMURF1, SMURF2 and NEDD4L2. Results in the proteasomal and/or lysosomal degradation of the receptor thereby negatively regulating its activity. Deubiquitinated by USP15, leading to stabilization of the protein and enhanced TGF-beta signal. Its ubiquitination and proteasome-mediated degradation is negatively regulated by SDCBP. Ubiquitinated by BFAR via'Lys-63'-linked ubiquitination at Lys-268, leading to TGF-beta signaling activation.

The protein resides in the cell membrane. The protein localises to the cell junction. It is found in the tight junction. It localises to the membrane raft. Its subcellular location is the cell surface. It carries out the reaction L-threonyl-[receptor-protein] + ATP = O-phospho-L-threonyl-[receptor-protein] + ADP + H(+). The enzyme catalyses L-seryl-[receptor-protein] + ATP = O-phospho-L-seryl-[receptor-protein] + ADP + H(+). Kept in an inactive conformation by FKBP1A preventing receptor activation in absence of ligand. CD109 is another inhibitor of the receptor. Its function is as follows. Transmembrane serine/threonine kinase forming with the TGF-beta type II serine/threonine kinase receptor, TGFBR2, the non-promiscuous receptor for the TGF-beta cytokines TGFB1, TGFB2 and TGFB3. Transduces the TGFB1, TGFB2 and TGFB3 signal from the cell surface to the cytoplasm and is thus regulating a plethora of physiological and pathological processes including cell cycle arrest in epithelial and hematopoietic cells, control of mesenchymal cell proliferation and differentiation, wound healing, extracellular matrix production, immunosuppression and carcinogenesis. The formation of the receptor complex composed of 2 TGFBR1 and 2 TGFBR2 molecules symmetrically bound to the cytokine dimer results in the phosphorylation and the activation of TGFBR1 by the constitutively active TGFBR2. Activated TGFBR1 phosphorylates SMAD2 which dissociates from the receptor and interacts with SMAD4. The SMAD2-SMAD4 complex is subsequently translocated to the nucleus where it modulates the transcription of the TGF-beta-regulated genes. This constitutes the canonical SMAD-dependent TGF-beta signaling cascade. Also involved in non-canonical, SMAD-independent TGF-beta signaling pathways. For instance, TGFBR1 induces TRAF6 autoubiquitination which in turn results in MAP3K7 ubiquitination and activation to trigger apoptosis. Also regulates epithelial to mesenchymal transition through a SMAD-independent signaling pathway through PARD6A phosphorylation and activation. The chain is TGF-beta receptor type-1 (Tgfbr1) from Mus musculus (Mouse).